We begin with the raw amino-acid sequence, 411 residues long: DSEFAELKIRGKIFKLPILKASIGEDVIDISRVSAEADCFTYDPGFMSTASCQSTITYIDGDKGILRHRGYNIKDLAEKSDFLEVAYLLIYGELPTIEQYNNFTTQVAHHSLVNERLHYLFQAFCSSSHPMAIMLAAVGSLSAFYPDLLNFKEADYELTAIRMIAKIPTIAAMSYKYSIGQPFIYPDNSLDFTENFLHMMFATPCTKYKVNPIIKNALNKIFILHADHEQNASTSTVRIAGSSGANAFACISTGIASLWGPAHGGANEAVINMLKEIGSSENIPKFIAKAKDKNDPFRLMGFGHRVYKNYDPRAAVLKETCKAVLKELGQLENNPLLQIAIELEAIALKDEYFIERKLYPNVDFYSGIIYKAMGIPSQMFTVLFAIARTVGWMAQWKEMHEDPEQKISRPR.

Residues His304 and Asp363 contribute to the active site.

Belongs to the citrate synthase family.

It carries out the reaction oxaloacetate + acetyl-CoA + H2O = citrate + CoA + H(+). The protein operates within carbohydrate metabolism; tricarboxylic acid cycle; isocitrate from oxaloacetate: step 1/2. In Rickettsia australis, this protein is Citrate synthase (gltA).